Consider the following 369-residue polypeptide: Glutamate 5-kinase (369 aa).

Residue K7 coordinates ATP. The substrate site is built by S48, D135, and N147. ATP contacts are provided by residues 167–168 (TD) and 208–214 (SGGMASK). A PUA domain is found at 275–353 (AGALHLDEGA…HEIAALLGIE (79 aa)).

This sequence belongs to the glutamate 5-kinase family.

Its subcellular location is the cytoplasm. It catalyses the reaction L-glutamate + ATP = L-glutamyl 5-phosphate + ADP. Its pathway is amino-acid biosynthesis; L-proline biosynthesis; L-glutamate 5-semialdehyde from L-glutamate: step 1/2. Functionally, catalyzes the transfer of a phosphate group to glutamate to form L-glutamate 5-phosphate. In Gloeobacter violaceus (strain ATCC 29082 / PCC 7421), this protein is Glutamate 5-kinase.